A 109-amino-acid polypeptide reads, in one-letter code: Large ribosomal subunit protein uL24 (109 aa).

Belongs to the universal ribosomal protein uL24 family. Part of the 50S ribosomal subunit.

Functionally, one of two assembly initiator proteins, it binds directly to the 5'-end of the 23S rRNA, where it nucleates assembly of the 50S subunit. Its function is as follows. One of the proteins that surrounds the polypeptide exit tunnel on the outside of the subunit. The chain is Large ribosomal subunit protein uL24 from Mesoplasma florum (strain ATCC 33453 / NBRC 100688 / NCTC 11704 / L1) (Acholeplasma florum).